A 373-amino-acid polypeptide reads, in one-letter code: UDP-N-acetylenolpyruvoylglucosamine reductase (373 aa).

In terms of domain architecture, FAD-binding PCMH-type spans 30-203 (LACTANSVVT…SRVGFRLHTD (174 aa)). Arg-180 is an active-site residue. Ser-258 acts as the Proton donor in catalysis. The active site involves Glu-356.

It belongs to the MurB family. Requires FAD as cofactor.

The protein resides in the cytoplasm. It carries out the reaction UDP-N-acetyl-alpha-D-muramate + NADP(+) = UDP-N-acetyl-3-O-(1-carboxyvinyl)-alpha-D-glucosamine + NADPH + H(+). Its pathway is cell wall biogenesis; peptidoglycan biosynthesis. Cell wall formation. This chain is UDP-N-acetylenolpyruvoylglucosamine reductase, found in Psychrobacter arcticus (strain DSM 17307 / VKM B-2377 / 273-4).